The primary structure comprises 345 residues: Biotin synthase (345 aa).

The Radical SAM core domain maps to 38–256 (QQVQVSTLLS…IAVARIMMPS (219 aa)). [4Fe-4S] cluster is bound by residues Cys-53, Cys-57, and Cys-60. [2Fe-2S] cluster is bound by residues Cys-97, Cys-128, Cys-188, and Arg-260.

This sequence belongs to the radical SAM superfamily. Biotin synthase family. In terms of assembly, homodimer. It depends on [4Fe-4S] cluster as a cofactor. Requires [2Fe-2S] cluster as cofactor.

It carries out the reaction (4R,5S)-dethiobiotin + (sulfur carrier)-SH + 2 reduced [2Fe-2S]-[ferredoxin] + 2 S-adenosyl-L-methionine = (sulfur carrier)-H + biotin + 2 5'-deoxyadenosine + 2 L-methionine + 2 oxidized [2Fe-2S]-[ferredoxin]. It functions in the pathway cofactor biosynthesis; biotin biosynthesis; biotin from 7,8-diaminononanoate: step 2/2. In terms of biological role, catalyzes the conversion of dethiobiotin (DTB) to biotin by the insertion of a sulfur atom into dethiobiotin via a radical-based mechanism. The sequence is that of Biotin synthase from Photorhabdus laumondii subsp. laumondii (strain DSM 15139 / CIP 105565 / TT01) (Photorhabdus luminescens subsp. laumondii).